A 354-amino-acid chain; its full sequence is NADH-quinone oxidoreductase subunit H (354 aa).

8 consecutive transmembrane segments (helical) span residues Ile-22 to Leu-42, Tyr-91 to Phe-111, Leu-124 to Ala-144, Val-162 to Leu-182, Leu-203 to Val-223, Gly-250 to Met-270, Ile-291 to Ile-311, and Leu-326 to Ile-346.

It belongs to the complex I subunit 1 family. As to quaternary structure, NDH-1 is composed of 14 different subunits. Subunits NuoA, H, J, K, L, M, N constitute the membrane sector of the complex.

It localises to the cell inner membrane. The catalysed reaction is a quinone + NADH + 5 H(+)(in) = a quinol + NAD(+) + 4 H(+)(out). In terms of biological role, NDH-1 shuttles electrons from NADH, via FMN and iron-sulfur (Fe-S) centers, to quinones in the respiratory chain. The immediate electron acceptor for the enzyme in this species is believed to be ubiquinone. Couples the redox reaction to proton translocation (for every two electrons transferred, four hydrogen ions are translocated across the cytoplasmic membrane), and thus conserves the redox energy in a proton gradient. This subunit may bind ubiquinone. This Cupriavidus metallidurans (strain ATCC 43123 / DSM 2839 / NBRC 102507 / CH34) (Ralstonia metallidurans) protein is NADH-quinone oxidoreductase subunit H.